The following is a 436-amino-acid chain: Glutamate-1-semialdehyde 2,1-aminomutase (436 aa).

Residue lysine 270 is modified to N6-(pyridoxal phosphate)lysine.

It belongs to the class-III pyridoxal-phosphate-dependent aminotransferase family. HemL subfamily. In terms of assembly, homodimer. Pyridoxal 5'-phosphate serves as cofactor.

Its subcellular location is the cytoplasm. The catalysed reaction is (S)-4-amino-5-oxopentanoate = 5-aminolevulinate. Its pathway is porphyrin-containing compound metabolism; protoporphyrin-IX biosynthesis; 5-aminolevulinate from L-glutamyl-tRNA(Glu): step 2/2. This chain is Glutamate-1-semialdehyde 2,1-aminomutase, found in Cutibacterium acnes (strain DSM 16379 / KPA171202) (Propionibacterium acnes).